The sequence spans 183 residues: SAGA-associated factor 11 homolog (183 aa).

The segment at 98–119 (CSCPNCNRIVAASRFAPHLEKC) adopts an SGF11-type zinc-finger fold. Residues 140–167 (GGNYFGADEDDEDDADWSGEKRKKKIAP) form a disordered region. The span at 146–156 (ADEDDEDDADW) shows a compositional bias: acidic residues.

Belongs to the SGF11 family. As to quaternary structure, component of some SAGA transcription coactivator-HAT complexes. Within the SAGA complex, participates in a subcomplex of SAGA called the DUB module (deubiquitination module).

Its subcellular location is the nucleus. In terms of biological role, component of the transcription regulatory histone acetylation (HAT) complex SAGA, a multiprotein complex that activates transcription by remodeling chromatin and mediating histone acetylation and deubiquitination. Within the SAGA complex, participates in a subcomplex that specifically deubiquitinates histone H2B. The SAGA complex is recruited to specific gene promoters by activators, where it is required for transcription. In Culex quinquefasciatus (Southern house mosquito), this protein is SAGA-associated factor 11 homolog.